We begin with the raw amino-acid sequence, 217 residues long: 3,4-dihydroxy-2-butanone 4-phosphate synthase (217 aa).

Residues 37 to 38 (RE), Asp42, 150 to 154 (RRGHT), and Glu174 each bind D-ribulose 5-phosphate. Residue Glu38 coordinates Mg(2+). Residue His153 participates in Mg(2+) binding.

It belongs to the DHBP synthase family. In terms of assembly, homodimer. The cofactor is Mg(2+). Mn(2+) is required as a cofactor.

It catalyses the reaction D-ribulose 5-phosphate = (2S)-2-hydroxy-3-oxobutyl phosphate + formate + H(+). The protein operates within cofactor biosynthesis; riboflavin biosynthesis; 2-hydroxy-3-oxobutyl phosphate from D-ribulose 5-phosphate: step 1/1. Its function is as follows. Catalyzes the conversion of D-ribulose 5-phosphate to formate and 3,4-dihydroxy-2-butanone 4-phosphate. This chain is 3,4-dihydroxy-2-butanone 4-phosphate synthase, found in Yersinia pseudotuberculosis serotype O:1b (strain IP 31758).